Consider the following 123-residue polypeptide: Protein Wnt-7a (123 aa).

A lipid anchor (O-palmitoleoyl serine; by PORCN) is attached at Ser-1. A disordered linker region spans residues 33–61 (VEPVRTHRNKRPVFLKIKKPLSYRKPMVT). A disulfide bridge links Cys-89 with Cys-104. 2 N-linked (GlcNAc...) asparagine glycosylation sites follow: Asn-90 and Asn-96.

The protein belongs to the Wnt family. As to quaternary structure, forms a soluble 1:1 complex with AFM; this prevents oligomerization and is required for prolonged biological activity. The complex with AFM may represent the physiological form in body fluids. Interacts with FZD5. Interacts with PORCN. Palmitoleoylation is required for efficient binding to frizzled receptors. Depalmitoleoylation leads to Wnt signaling pathway inhibition.

Its subcellular location is the secreted. The protein resides in the extracellular space. The protein localises to the extracellular matrix. Ligand for members of the frizzled family of seven transmembrane receptors that functions in the canonical Wnt/beta-catenin signaling pathway. Plays an important role in embryonic development, including dorsal versus ventral patterning during limb development, skeleton development and urogenital tract development. Required for central nervous system (CNS) angiogenesis and blood-brain barrier regulation. This is Protein Wnt-7a (WNT-7A) from Alopias vulpinus (Common thresher shark).